Consider the following 61-residue polypeptide: Metallothionein-1E (61 aa).

Position 1 is an N-acetylmethionine (Met-1). Positions 1–29 (MDPNCSCATGGSCTCAGSCKCKECKCTSC) are beta. Positions 5, 7, 13, 15, 19, 21, 24, 26, 29, 33, 34, 36, 37, 41, 44, 48, 50, 57, 59, and 60 each coordinate a divalent metal cation. The segment at 30–61 (KKSCCSCCPVGCAKCAQGCVCKGASEKCSCCA) is alpha.

Belongs to the metallothionein superfamily. Type 1 family. In terms of assembly, monomer.

Its function is as follows. Metallothioneins have a high content of cysteine residues that bind various heavy metals; these proteins are transcriptionally regulated by both heavy metals and glucocorticoids. In Homo sapiens (Human), this protein is Metallothionein-1E (MT1E).